The sequence spans 373 residues: SAM domain-containing protein SAMSN-1 (373 aa).

Residues 1 to 72 (MLKRKPSNVS…GGGLGKKMRA (72 aa)) form a disordered region. Positions 20–25 (RSSSFG) match the Important for interaction with 14-3-3 proteins motif. Residues Ser-23 and Ser-34 each carry the phosphoserine modification. The span at 37-48 (KPDDSTEAHEGD) shows a compositional bias: basic and acidic residues. Residues 50–61 (TNGSGEQSKTSN) show a composition bias toward polar residues. Ser-74 bears the Phosphoserine mark. Thr-76 carries the post-translational modification Phosphothreonine. 2 positions are modified to phosphoserine: Ser-90 and Ser-119. Residues 91 to 153 (EEKDEEDGEN…DGTSNRDSFR (63 aa)) are disordered. Residues 123–146 (SDSMDSLYSGQSSSSGITSCSDGT) show a composition bias toward low complexity. Phosphotyrosine is present on Tyr-160. Positions 163–224 (PFCGRARVHT…KFIYVDVISE (62 aa)) constitute an SH3 domain. The 65-residue stretch at 241–305 (KKSKTLQEFL…LSAAENFLEE (65 aa)) folds into the SAM domain. Residues 337–359 (DSGCYISSGNSDNGKEDLESENL) form a disordered region.

As to quaternary structure, interacts with FASLG. Interacts with phosphotyrosine containing proteins. Interacts (via SH3 domain) with CTTN. Interacts (phosphorylated at Ser-23) with YWHAB, YWHAE, YWHAG, YWHAH, YWHAZ and SFN. Interacts directly with SAP30 and HDAC1. Identified in a complex with SAP30 and HDAC1. Detected in peripheral blood B-cells (at protein level). Detected in spleen, liver and peripheral blood.

The protein localises to the nucleus. Its subcellular location is the cytoplasm. The protein resides in the cell projection. It localises to the ruffle. In terms of biological role, negative regulator of B-cell activation. Down-regulates cell proliferation (in vitro). Promotes RAC1-dependent membrane ruffle formation and reorganization of the actin cytoskeleton. Regulates cell spreading and cell polarization. Stimulates HDAC1 activity. Regulates LYN activity by modulating its tyrosine phosphorylation. The polypeptide is SAM domain-containing protein SAMSN-1 (SAMSN1) (Homo sapiens (Human)).